The chain runs to 349 residues: Anaerobic nitrite reductase Glb1-3 (349 aa).

Globin domains lie at 13–162 and 184–333; these read GFTE…AEMK and CFTE…AEMK. Heme b contacts are provided by serine 56, lysine 70, histidine 74, lysine 104, threonine 108, histidine 109, serine 227, lysine 241, histidine 245, lysine 275, threonine 279, and histidine 280.

It belongs to the plant globin family. Monomer. Heme b is required as a cofactor.

Its subcellular location is the cytoplasm. It is found in the nucleus. The catalysed reaction is Fe(III)-heme b-[protein] + nitric oxide + H2O = Fe(II)-heme b-[protein] + nitrite + 2 H(+). Phytoglobin that regulates the fine tuning of nitric oxide (NO) concentration in the cytosol in response to sudden changes in O(2) availability, and performs both symbiotic and nonsymbiotic functions. Exhibits NO dioxygenase activity in the presence of O(2) but nitrite reductase (NiR) activity in the absence of O(2) (e.g. during flooding or in waterlogged soil). May not function as an oxygen storage or transport protein. Extremely reactive toward the physiological ligands O(2), nitric oxide (NO), and nitrite with a very high affinity for O(2) through an hexacoordinate heme iron because of a very low dissociation constant. In Medicago truncatula (Barrel medic), this protein is Anaerobic nitrite reductase Glb1-3.